We begin with the raw amino-acid sequence, 192 residues long: Pupal cuticle protein (192 aa).

A signal peptide spans M1–Q15. Positions D45–P106 constitute a Chitin-binding type R&amp;R domain. Residues Q149–K163 show a composition bias toward polar residues. Residues Q149 to R192 are disordered.

Functionally, component of the cuticle of the pupa of fruit fly. In Drosophila pseudoobscura pseudoobscura (Fruit fly), this protein is Pupal cuticle protein (Pcp).